The primary structure comprises 374 residues: Beta-lytic metalloendopeptidase (374 aa).

The signal sequence occupies residues 1–24; that stretch reads MKKISKAGLGLALVCALATIGGNA. A propeptide spanning residues 25-195 is cleaved from the precursor; it reads ARRATAQRRG…RQGRPGRAAV (171 aa). The tract at residues 128 to 187 is disordered; it reads PTRQGAGDAGPRQSAAGAVRAFRRQRAGGRAARRRRVPAGLRPPVQRTAPGQGGFGPLRQ. Positions 148 to 164 are enriched in basic residues; that stretch reads AFRRQRAGGRAARRRRV. Cysteines 261 and 307 form a disulfide. Positions 316 and 318 each coordinate Zn(2+). A disulfide bond links Cys-351 and Cys-364.

It belongs to the peptidase M23A family. Zn(2+) serves as cofactor.

It is found in the secreted. The enzyme catalyses Cleavage of N-acetylmuramoyl-|-Ala, and of the insulin B chain at 23-Gly-|-Phe-24 &gt; 18-Val-|-Cys(SO3H).. The polypeptide is Beta-lytic metalloendopeptidase (Achromobacter lyticus).